We begin with the raw amino-acid sequence, 515 residues long: Sodium/hydrogen exchanger 9B1 (515 aa).

A compositionally biased stretch (basic and acidic residues) spans 1–10 (MHTTESKNEH). Residues 1-32 (MHTTESKNEHLEDENFQTSTTPQSLIDPNNTA) are disordered. The span at 16–32 (FQTSTTPQSLIDPNNTA) shows a compositional bias: polar residues. 13 consecutive transmembrane segments (helical) span residues 66–86 (VIITNGVILFVIWCMTWSILG), 95–115 (LFGLFIIFYSAIIGGKILQLI), 116–136 (RIPLVPPLPPLLGMLLAGFTI), 152–172 (WSSILRSIALTIILIRAGLGL), 187–207 (LAVGPCLMEASAAAVFSHFIM), 215–235 (FLLGFVLGAVSPAVVVPYMMV), 260–280 (ILAITGFNTCLSIVFSSGGIL), 284–304 (IASIRNVCISLLAGIVLGFFV), 337–357 (IGLHGSGGLCTLVLSFIAGTK), 368–388 (IITTVWDIFQPLLFGLVGAEV), 407–427 (LALCVRILTTYLLMCFAGFSF), 431–451 (IFIALAWMPKATVQAVLGPLA), and 472–492 (VAFLAILITAPNGALLMGILG).

The protein belongs to the monovalent cation:proton antiporter 1 (CPA1) transporter (TC 2.A.36) family. Expressed only in the testis.

It is found in the cell projection. The protein localises to the cilium. The protein resides in the flagellum membrane. In terms of biological role, sperm-specific Na(+)/H(+) exchanger involved in intracellular pH regulation of spermatozoa. Involved in sperm motility and fertility. The protein is Sodium/hydrogen exchanger 9B1 of Homo sapiens (Human).